The following is a 312-amino-acid chain: Olfactory receptor 6Z7 (312 aa).

The Extracellular segment spans residues 1 to 29; the sequence is MERSLALANMTRVQQFILLGLSTRLDIRD. Asn-9 is a glycosylation site (N-linked (GlcNAc...) asparagine). Residues 30 to 50 traverse the membrane as a helical segment; the sequence is ALFAVFLTLYLLTLLENTLII. At 51–69 the chain is on the cytoplasmic side; it reads YLICSHKELHKPMYFFLGN. A helical transmembrane segment spans residues 70–90; that stretch reads LSCLEMCYVSVTMPTLLMGLW. Asn-91 is a topological domain (extracellular). The helical transmembrane segment at 92-112 threads the bilayer; the sequence is GLYHIPFIACMTQLFFFIVLV. The cysteines at positions 101 and 193 are disulfide-linked. The Cytoplasmic portion of the chain corresponds to 113–141; it reads GTECILLASMAYDRYVAICRPLHYPVLMR. The helical transmembrane segment at 142–162 threads the bilayer; the sequence is PQVCLGLAMISWLGGLLVSMI. The Extracellular portion of the chain corresponds to 163–195; it reads KTTCIATLSYCGPNVLNHFFCDVSPLLNLSCTH. Asn-190 carries N-linked (GlcNAc...) asparagine glycosylation. Residues 196 to 216 traverse the membrane as a helical segment; that stretch reads VALTELVDFISAIVILWGCFL. Residues 217 to 241 lie on the Cytoplasmic side of the membrane; sequence TTMASYVAIGRAVLRMPSTTARYKA. The helical transmembrane segment at 242–262 threads the bilayer; the sequence is FSTCASHLVVVGIFYSVTIFI. The Extracellular portion of the chain corresponds to 263–275; the sequence is YARPKRIEAMDLN. The helical transmembrane segment at 276–296 threads the bilayer; sequence KVLSVIYTVVTPMCNPVIYCL. Over 297-312 the chain is Cytoplasmic; that stretch reads RNKEVQVALHRTMHWS.

The protein belongs to the G-protein coupled receptor 1 family.

The protein resides in the cell membrane. Odorant receptor. This is Olfactory receptor 6Z7 from Mus musculus (Mouse).